Reading from the N-terminus, the 509-residue chain is tRNA (guanine(37)-N(1))-methyltransferase (509 aa).

The N-terminal 57 residues, 1–57, are a transit peptide targeting the mitochondrion; that stretch reads MVLWILWRPFGFSRRLLKLERHSITESKSLIPLAWTSLTQTLSESPGIFLLGQRKRF. S-adenosyl-L-methionine is bound by residues H289, 327–328, 355–356, and N387; these read DL and DG. The interval 478–509 is disordered; it reads TKNPENHEDPPLKRQRTAEAFSDEKTQIASNT.

Belongs to the class I-like SAM-binding methyltransferase superfamily. TRM5/TYW2 family. Monomer.

Its subcellular location is the mitochondrion matrix. It is found in the nucleus. It localises to the cytoplasm. It carries out the reaction guanosine(37) in tRNA + S-adenosyl-L-methionine = N(1)-methylguanosine(37) in tRNA + S-adenosyl-L-homocysteine + H(+). Its function is as follows. Involved in mitochondrial tRNA methylation. Specifically methylates the N1 position of guanosine-37 in various tRNAs. Methylation is not dependent on the nature of the nucleoside 5' of the target nucleoside. This is the first step in the biosynthesis of wybutosine (yW), a modified base adjacent to the anticodon of tRNAs and required for accurate decoding. In Macaca mulatta (Rhesus macaque), this protein is tRNA (guanine(37)-N(1))-methyltransferase.